We begin with the raw amino-acid sequence, 65 residues long: Large ribosomal subunit protein bL35 (65 aa).

Residues 1–16 are compositionally biased toward basic residues; it reads MVPKQKTHSGAKKRFK. A disordered region spans residues 1–39; sequence MVPKQKTHSGAKKRFKLTGSGSVSRARAGMRHNFEHRSS.

This sequence belongs to the bacterial ribosomal protein bL35 family.

In Tropheryma whipplei (strain TW08/27) (Whipple's bacillus), this protein is Large ribosomal subunit protein bL35.